We begin with the raw amino-acid sequence, 101 residues long: Protein translation factor SUI1 homolog (101 aa).

It belongs to the SUI1 family.

The chain is Protein translation factor SUI1 homolog from Methanoregula boonei (strain DSM 21154 / JCM 14090 / 6A8).